Reading from the N-terminus, the 211-residue chain is Small ribosomal subunit protein uS3 (211 aa).

The KH type-2 domain occupies 38-106 (LRNFLKKRLY…EVYLNIQEVR (69 aa)).

It belongs to the universal ribosomal protein uS3 family. Part of the 30S ribosomal subunit. Forms a tight complex with proteins S10 and S14.

Its function is as follows. Binds the lower part of the 30S subunit head. Binds mRNA in the 70S ribosome, positioning it for translation. The sequence is that of Small ribosomal subunit protein uS3 from Geobacter sp. (strain M21).